The primary structure comprises 273 residues: Major prion protein homolog (273 aa).

The N-terminal stretch at 1–24 is a signal peptide; that stretch reads MARLLTTCCLLALLLAACTDVALS. The segment at 25–121 is disordered; sequence KKGKGKPSGG…QKPWKPPKTN (97 aa). Tandem repeats lie at residues 42–47, 48–53, 54–59, 60–65, 66–71, 72–77, 78–83, and 84–89. The segment at 42 to 89 is 8 X 6 AA tandem repeats of [HR]-[NQ]-P-G-Y-P; that stretch reads RQPSYPRQPGYPHNPGYPHNPGYPHNPGYPHNPGYPHNPGYPQNPGYP. Over residues 51 to 94 the composition is skewed to low complexity; the sequence is GYPHNPGYPHNPGYPHNPGYPHNPGYPHNPGYPQNPGYPHNPGY. 3 residues coordinate Cu(2+): histidine 66, histidine 72, and histidine 78. Residues histidine 90 and glycine 93 each coordinate Cu(2+). The span at 101-111 shows a compositional bias: polar residues; the sequence is YNPSSGGSYHN. The cysteines at positions 192 and 237 are disulfide-linked. N-linked (GlcNAc...) asparagine glycans are attached at residues asparagine 194, asparagine 209, and asparagine 218. Serine 248 is lipidated: GPI-anchor amidated serine. A propeptide spans 249-273 (removed in mature form); sequence GIQLHPADTWLAVLLLLLTTLFAMH.

Belongs to the prion family. As to quaternary structure, monomer and homodimer. Has a tendency to aggregate into amyloid fibrils containing a cross-beta spine, formed by a steric zipper of superposed beta-strands. Soluble oligomers may represent an intermediate stage on the path to fibril formation. Copper binding may promote oligomerization. Spinal cord and brain.

The protein resides in the cell membrane. In terms of biological role, its primary physiological function is unclear. Has cytoprotective activity against internal or environmental stresses. May play a role in neuronal development and synaptic plasticity. May be required for neuronal myelin sheath maintenance. May play a role in iron uptake and iron homeostasis. Soluble oligomers are toxic to cultured neuroblastoma cells and induce apoptosis (in vitro). Association with GPC1 (via its heparan sulfate chains) targets PRNP to lipid rafts. Also provides Cu(2+) or Zn(2+) for the ascorbate-mediated GPC1 deaminase degradation of its heparan sulfate side chains. The sequence is that of Major prion protein homolog (PRNP) from Gallus gallus (Chicken).